We begin with the raw amino-acid sequence, 78 residues long: Putative gastrointestinal growth factor xP1 (78 aa).

A signal peptide spans 1 to 23 (MNYKVFCLVAIALIVGSIGSANG). The 44-residue stretch at 30–73 (EQCSVERLARVNCGYSGITPQECTKQGCCFDSTIQDAPWCFYPR) folds into the P-type domain. Cystine bridges form between cysteine 32/cysteine 58, cysteine 42/cysteine 57, and cysteine 52/cysteine 69.

In terms of tissue distribution, stomach mucosa.

It is found in the secreted. Its function is as follows. May act as a growth factor. The polypeptide is Putative gastrointestinal growth factor xP1 (p1) (Xenopus laevis (African clawed frog)).